The sequence spans 602 residues: Histone-arginine methyltransferase CARM1 (602 aa).

Positions 117 to 424 constitute an SAM-dependent MTase PRMT-type domain; it reads AVQYFQFYGY…KKQSYDISIV (308 aa). Positions 130, 139, 163, 185, 214, and 242 each coordinate S-adenosyl-L-methionine. The segment at 470 to 602 is transactivation domain; that stretch reads TGGAYTMNTG…ITTNTMHYGS (133 aa).

The protein belongs to the class I-like SAM-binding methyltransferase superfamily. Protein arginine N-methyltransferase family. As to quaternary structure, homodimer.

It localises to the nucleus. The protein resides in the cytoplasm. Its subcellular location is the chromosome. The catalysed reaction is L-arginyl-[protein] + 2 S-adenosyl-L-methionine = N(omega),N(omega)-dimethyl-L-arginyl-[protein] + 2 S-adenosyl-L-homocysteine + 2 H(+). Its function is as follows. Methylates (mono- and asymmetric dimethylation) the guanidino nitrogens of arginyl residues in several proteins involved in DNA packaging, transcription regulation, pre-mRNA splicing, and mRNA stability. Recruited to promoters upon gene activation together with histone acetyltransferases from EP300/P300 and p160 families, methylates histone H3 at 'Arg-17' (H3R17me) and activates transcription via chromatin remodeling. The protein is Histone-arginine methyltransferase CARM1 (carm1) of Xenopus laevis (African clawed frog).